The primary structure comprises 260 residues: Hydroxyethylthiazole kinase 1 (260 aa).

Substrate is bound at residue Met39. ATP is bound by residues Arg115 and Thr160. Position 187 (Gly187) interacts with substrate.

It belongs to the Thz kinase family. Requires Mg(2+) as cofactor.

It catalyses the reaction 5-(2-hydroxyethyl)-4-methylthiazole + ATP = 4-methyl-5-(2-phosphooxyethyl)-thiazole + ADP + H(+). Its pathway is cofactor biosynthesis; thiamine diphosphate biosynthesis; 4-methyl-5-(2-phosphoethyl)-thiazole from 5-(2-hydroxyethyl)-4-methylthiazole: step 1/1. In terms of biological role, catalyzes the phosphorylation of the hydroxyl group of 4-methyl-5-beta-hydroxyethylthiazole (THZ). In Streptococcus pneumoniae serotype 2 (strain D39 / NCTC 7466), this protein is Hydroxyethylthiazole kinase 1.